The primary structure comprises 183 residues: Adenine phosphoribosyltransferase (183 aa).

The protein belongs to the purine/pyrimidine phosphoribosyltransferase family. In terms of assembly, homodimer.

Its subcellular location is the cytoplasm. The catalysed reaction is AMP + diphosphate = 5-phospho-alpha-D-ribose 1-diphosphate + adenine. Its pathway is purine metabolism; AMP biosynthesis via salvage pathway; AMP from adenine: step 1/1. Functionally, catalyzes a salvage reaction resulting in the formation of AMP, that is energically less costly than de novo synthesis. This is Adenine phosphoribosyltransferase from Shewanella piezotolerans (strain WP3 / JCM 13877).